Consider the following 528-residue polypeptide: GMP synthase [glutamine-hydrolyzing] (528 aa).

The region spanning 13–204 (AIVILDFGSQ…VYHICGCEPD (192 aa)) is the Glutamine amidotransferase type-1 domain. Cys90 serves as the catalytic Nucleophile. Catalysis depends on residues His178 and Glu180. Positions 205–403 (WTTSAFIDEA…LGLPEEIVRR (199 aa)) constitute a GMPS ATP-PPase domain. 232 to 238 (SGGVDSS) contributes to the ATP binding site.

In terms of assembly, homodimer.

It carries out the reaction XMP + L-glutamine + ATP + H2O = GMP + L-glutamate + AMP + diphosphate + 2 H(+). It functions in the pathway purine metabolism; GMP biosynthesis; GMP from XMP (L-Gln route): step 1/1. In terms of biological role, catalyzes the synthesis of GMP from XMP. The protein is GMP synthase [glutamine-hydrolyzing] of Parasynechococcus marenigrum (strain WH8102).